Here is a 120-residue protein sequence, read N- to C-terminus: Immunoglobulin lambda variable 2-14 (120 aa).

An N-terminal signal peptide occupies residues 1-19 (MAWALLLLTLLTQGTGSWA). Q20 is modified (pyrrolidone carboxylic acid). The interval 20–44 (QSALTQPASVSGSPGQSITISCTGT) is framework-1. An Ig-like domain is found at 20–119 (QSALTQPASV…SSYTSSSTLH (100 aa)). A disulfide bond links C41 and C109. A complementarity-determining-1 region spans residues 45 to 53 (SSDVGGYNY). Residues 54–70 (VSWYQQHPGKAPKLMIY) are framework-2. A complementarity-determining-2 region spans residues 71–73 (EVS). Residues 74–109 (NRPSGVSNRFSGSKSGNTASLTISGLQAEDEADYYC) form a framework-3 region. The complementarity-determining-3 stretch occupies residues 110 to 119 (SSYTSSSTLH).

As to quaternary structure, immunoglobulins are composed of two identical heavy chains and two identical light chains; disulfide-linked.

It is found in the secreted. Its subcellular location is the cell membrane. Its function is as follows. V region of the variable domain of immunoglobulin light chains that participates in the antigen recognition. Immunoglobulins, also known as antibodies, are membrane-bound or secreted glycoproteins produced by B lymphocytes. In the recognition phase of humoral immunity, the membrane-bound immunoglobulins serve as receptors which, upon binding of a specific antigen, trigger the clonal expansion and differentiation of B lymphocytes into immunoglobulins-secreting plasma cells. Secreted immunoglobulins mediate the effector phase of humoral immunity, which results in the elimination of bound antigens. The antigen binding site is formed by the variable domain of one heavy chain, together with that of its associated light chain. Thus, each immunoglobulin has two antigen binding sites with remarkable affinity for a particular antigen. The variable domains are assembled by a process called V-(D)-J rearrangement and can then be subjected to somatic hypermutations which, after exposure to antigen and selection, allow affinity maturation for a particular antigen. This Homo sapiens (Human) protein is Immunoglobulin lambda variable 2-14.